The sequence spans 717 residues: Ribosomal RNA large subunit methyltransferase K/L (717 aa).

Residues 45-142 enclose the THUMP domain; that stretch reads GAYRICLGSR…DKRSGVQTVQ (98 aa).

This sequence belongs to the methyltransferase superfamily. RlmKL family.

It localises to the cytoplasm. It carries out the reaction guanosine(2445) in 23S rRNA + S-adenosyl-L-methionine = N(2)-methylguanosine(2445) in 23S rRNA + S-adenosyl-L-homocysteine + H(+). It catalyses the reaction guanosine(2069) in 23S rRNA + S-adenosyl-L-methionine = N(2)-methylguanosine(2069) in 23S rRNA + S-adenosyl-L-homocysteine + H(+). Its function is as follows. Specifically methylates the guanine in position 2445 (m2G2445) and the guanine in position 2069 (m7G2069) of 23S rRNA. The protein is Ribosomal RNA large subunit methyltransferase K/L of Hahella chejuensis (strain KCTC 2396).